The sequence spans 563 residues: Endoglucanase B (563 aa).

Residues 1–27 constitute a signal peptide (or 31); it reads MKKFLVLLIALIMIATLLVVPGVQTSA. Glu204 (proton donor) is an active-site residue. Glu363 functions as the Nucleophile in the catalytic mechanism. Positions 476-495 are disordered; it reads SVTPSPSATPSPTTITAPPT. The Dockerin domain maps to 496-562; that stretch reads DTVTYGDVNG…VLRSISELPY (67 aa).

The protein belongs to the glycosyl hydrolase 5 (cellulase A) family.

It catalyses the reaction Endohydrolysis of (1-&gt;4)-beta-D-glucosidic linkages in cellulose, lichenin and cereal beta-D-glucans.. In terms of biological role, this enzyme catalyzes the endohydrolysis of 1,4-beta-glucosidic linkages in cellulose, lichenin and cereal beta-D-glucans. In Acetivibrio thermocellus (strain ATCC 27405 / DSM 1237 / JCM 9322 / NBRC 103400 / NCIMB 10682 / NRRL B-4536 / VPI 7372) (Clostridium thermocellum), this protein is Endoglucanase B (celB).